Here is a 290-residue protein sequence, read N- to C-terminus: Glycine-N-acyltransferase-like protein 3 (290 aa).

The catalysed reaction is an acyl-CoA + glycine = an N-acylglycine + CoA + H(+). The enzyme catalyses (9Z)-octadecenoyl-CoA + glycine = N-(9Z-octadecenoyl)glycine + CoA + H(+). It carries out the reaction hexadecanoyl-CoA + glycine = N-hexadecanoylglycine + CoA + H(+). The protein operates within lipid metabolism. In terms of biological role, catalyzes the conjugation of long-chain fatty acyl-CoA thioester and glycine to produce long-chain N-(fatty acyl)glycine, an intermediate in the primary fatty acid amide biosynthetic pathway. This Mus musculus (Mouse) protein is Glycine-N-acyltransferase-like protein 3.